Consider the following 295-residue polypeptide: Glutamyl-Q tRNA(Asp) synthetase (295 aa).

Residues 9 to 13 (RFAPT) and Glu-45 contribute to the L-glutamate site. The short motif at 12–22 (PTPSGYLHFGS) is the 'HIGH' region element. Residues Cys-101, Cys-103, Tyr-115, and Cys-119 each coordinate Zn(2+). Residues Tyr-172 and Arg-190 each coordinate L-glutamate. A 'KMSKS' region motif is present at residues 228–232 (KLGKS). Lys-231 contacts ATP.

Belongs to the class-I aminoacyl-tRNA synthetase family. GluQ subfamily. Zn(2+) serves as cofactor.

Functionally, catalyzes the tRNA-independent activation of glutamate in presence of ATP and the subsequent transfer of glutamate onto a tRNA(Asp). Glutamate is transferred on the 2-amino-5-(4,5-dihydroxy-2-cyclopenten-1-yl) moiety of the queuosine in the wobble position of the QUC anticodon. This is Glutamyl-Q tRNA(Asp) synthetase from Pseudomonas syringae pv. syringae (strain B728a).